A 219-amino-acid chain; its full sequence is Ribose-5-phosphate isomerase A (219 aa).

Residues T28–T31, D81–D84, and K94–G97 contribute to the substrate site. Catalysis depends on E103, which acts as the Proton acceptor. K121 provides a ligand contact to substrate.

The protein belongs to the ribose 5-phosphate isomerase family. In terms of assembly, homodimer.

It carries out the reaction aldehydo-D-ribose 5-phosphate = D-ribulose 5-phosphate. Its pathway is carbohydrate degradation; pentose phosphate pathway; D-ribose 5-phosphate from D-ribulose 5-phosphate (non-oxidative stage): step 1/1. Its function is as follows. Catalyzes the reversible conversion of ribose-5-phosphate to ribulose 5-phosphate. The protein is Ribose-5-phosphate isomerase A of Shewanella loihica (strain ATCC BAA-1088 / PV-4).